The following is a 458-amino-acid chain: Transcription factor verZ (458 aa).

A DNA-binding region (zn(2)-C6 fungal-type) is located at residues 117–144 (CDRCQAAKVKCGHEKPSCRRCTYHKVEC). Disordered regions lie at residues 153–256 (GRPR…MQSM) and 435–458 (MEEE…EDGK). 3 stretches are compositionally biased toward polar residues: residues 167 to 186 (PSPQ…SKSA), 193 to 207 (FTGT…QSPV), and 223 to 235 (RAEP…TTNF).

Its subcellular location is the nucleus. Functionally, transcription factor; part of the gene cluster that mediates the biosynthesis of 11'-deoxyverticillin A, one of the dimeric epipolythiodioxopiperazines (ETPs) from the verticillin family that act as mycotoxins. 11'-deoxyverticillin A is required for normal conidiation. Directly binds the consensus motif 5'-(T/C)(C/A)(G/T)GN3CC(G/T)(A/G)(G/C)-3' localized in the upstream regions of the verticillin biosynthetic genes. This chain is Transcription factor verZ, found in Clonostachys rogersoniana.